A 319-amino-acid polypeptide reads, in one-letter code: Ribosomal protein L11 methyltransferase (319 aa).

Threonine 165, glycine 186, aspartate 208, and asparagine 251 together coordinate S-adenosyl-L-methionine.

It belongs to the methyltransferase superfamily. PrmA family.

It is found in the cytoplasm. The catalysed reaction is L-lysyl-[protein] + 3 S-adenosyl-L-methionine = N(6),N(6),N(6)-trimethyl-L-lysyl-[protein] + 3 S-adenosyl-L-homocysteine + 3 H(+). Methylates ribosomal protein L11. This Limosilactobacillus reuteri subsp. reuteri (strain JCM 1112) (Lactobacillus reuteri) protein is Ribosomal protein L11 methyltransferase.